A 314-amino-acid polypeptide reads, in one-letter code: tRNA uridine(34) hydroxylase (314 aa).

The region spanning 135–229 (SDPDTIVIDT…YLEEVPEEES (95 aa)) is the Rhodanese domain. The active-site Cysteine persulfide intermediate is the cysteine 189.

The protein belongs to the TrhO family.

The enzyme catalyses uridine(34) in tRNA + AH2 + O2 = 5-hydroxyuridine(34) in tRNA + A + H2O. Catalyzes oxygen-dependent 5-hydroxyuridine (ho5U) modification at position 34 in tRNAs. This chain is tRNA uridine(34) hydroxylase, found in Agrobacterium fabrum (strain C58 / ATCC 33970) (Agrobacterium tumefaciens (strain C58)).